The primary structure comprises 559 residues: ADP,ATP carrier protein 1 (559 aa).

The segment covering Met-1–Ser-10 has biased composition (polar residues). A disordered region spans residues Met-1–Ile-22. The N-linked (GlcNAc...) asparagine glycan is linked to Asn-8. The next 4 membrane-spanning stretches (helical) occupy residues Phe-46–Leu-66, Thr-79–Ile-99, Ile-111–Leu-131, and Ile-174–Phe-194. Asn-196 carries N-linked (GlcNAc...) asparagine glycosylation. Transmembrane regions (helical) follow at residues Pro-210–Phe-230 and Gln-242–Leu-262. The N-linked (GlcNAc...) asparagine glycan is linked to Asn-290. Helical transmembrane passes span Leu-305–Ser-325, Gln-354–Val-373, and Gly-377–Leu-397. An N-linked (GlcNAc...) asparagine glycan is attached at Asn-403. Helical transmembrane passes span Tyr-425–Phe-447, Ile-473–Leu-493, and Pro-503–Leu-523.

The protein belongs to the ADP/ATP translocase tlc family.

The protein resides in the cell membrane. Functionally, ATP transporter involved in the uptake of ATP from the host cell cytoplasm. Provides the microsporidian cell with host ATP in exchange for ADP. This is an obligate exchange system. This energy acquiring activity is an important component of microsporidian parasitism. The chain is ADP,ATP carrier protein 1 (NTT1) from Encephalitozoon cuniculi (strain GB-M1) (Microsporidian parasite).